The chain runs to 712 residues: Polyribonucleotide nucleotidyltransferase (712 aa).

Mg(2+) is bound by residues Asp-487 and Asp-493. The 60-residue stretch at 554–613 (PKIITMTINPDKIRDVIGPSGKQINKIIEETGVKIDIEQDGTVFISSINQEMNDKAKKII) folds into the KH domain. In terms of domain architecture, S1 motif spans 623 to 691 (GEIYEGKVKR…KQGRVNLSRK (69 aa)).

The protein belongs to the polyribonucleotide nucleotidyltransferase family. Mg(2+) is required as a cofactor.

Its subcellular location is the cytoplasm. The catalysed reaction is RNA(n+1) + phosphate = RNA(n) + a ribonucleoside 5'-diphosphate. Its function is as follows. Involved in mRNA degradation. Catalyzes the phosphorolysis of single-stranded polyribonucleotides processively in the 3'- to 5'-direction. The polypeptide is Polyribonucleotide nucleotidyltransferase (Bacillus anthracis).